A 193-amino-acid chain; its full sequence is dCTP deaminase (193 aa).

DCTP-binding positions include 110–115 (RSSLAR), aspartate 128, 136–138 (VLE), tyrosine 171, lysine 178, and glutamine 182. Glutamate 138 serves as the catalytic Proton donor/acceptor. Positions 169–193 (RPYNRRQDAKYRDQQGAVASRIDKD) are disordered.

This sequence belongs to the dCTP deaminase family. Homotrimer.

It carries out the reaction dCTP + H2O + H(+) = dUTP + NH4(+). The protein operates within pyrimidine metabolism; dUMP biosynthesis; dUMP from dCTP (dUTP route): step 1/2. Its function is as follows. Catalyzes the deamination of dCTP to dUTP. This chain is dCTP deaminase, found in Cronobacter sakazakii (strain ATCC BAA-894) (Enterobacter sakazakii).